The following is a 134-amino-acid chain: Small ribosomal subunit protein uS8c (134 aa).

This sequence belongs to the universal ribosomal protein uS8 family. As to quaternary structure, part of the 30S ribosomal subunit.

Its subcellular location is the plastid. The protein localises to the chloroplast. Functionally, one of the primary rRNA binding proteins, it binds directly to 16S rRNA central domain where it helps coordinate assembly of the platform of the 30S subunit. The chain is Small ribosomal subunit protein uS8c (rps8) from Lactuca sativa (Garden lettuce).